The chain runs to 1884 residues: Fatty acid synthase subunit alpha (1884 aa).

A disordered region spans residues 91–141 (TPDPAEPPAAEEPKAETGKESAPAASAAAAAATQPAAAVAPPPQSAGPVES). Residues 111–129 (SAPAASAAAAAATQPAAAV) show a composition bias toward low complexity. The 76-residue stretch at 147 to 222 (VKASLLIHVL…EQFQDTFSGS (76 aa)) folds into the Carrier domain. Residue serine 182 is modified to O-(pantetheine 4'-phosphoryl)serine. The interval 583–613 (TEQTTQDALAIPTGSNTPTEEDELSTASDDD) is disordered. Polar residues predominate over residues 584–600 (EQTTQDALAIPTGSNTP). A compositionally biased stretch (acidic residues) spans 601–613 (TEEDELSTASDDD). The tract at residues 677–873 (DKYVLVTGAG…CGAIIGWTRG (197 aa)) is beta-ketoacyl reductase. A Ketosynthase family 3 (KS3) domain is found at 1120–1660 (IQEVVIQHDL…QKGAQAVVVH (541 aa)). Catalysis depends on for beta-ketoacyl synthase activity residues cysteine 1303, histidine 1545, and histidine 1586. Residues aspartate 1770, valine 1771, and glutamate 1772 each coordinate Mg(2+). Residues 1770–1772 (DVE), tyrosine 1796, serine 1806, 1815–1825 (EATFKALGVSS), 1839–1842 (RDGN), and 1869–1871 (ISH) each bind acetyl-CoA. The Mg(2+) site is built by serine 1870 and histidine 1871.

It belongs to the thiolase-like superfamily. Fungal fatty acid synthetase subunit alpha family. As to quaternary structure, fatty acid synthase is composed of alpha and beta subunits.

The enzyme catalyses acetyl-CoA + n malonyl-CoA + 2n NADPH + 4n H(+) = a long-chain-acyl-CoA + n CoA + n CO2 + 2n NADP(+).. It carries out the reaction a fatty acyl-[ACP] + malonyl-[ACP] + H(+) = a 3-oxoacyl-[ACP] + holo-[ACP] + CO2. It catalyses the reaction a (3R)-hydroxyacyl-[ACP] + NADP(+) = a 3-oxoacyl-[ACP] + NADPH + H(+). Fatty acid synthetase catalyzes the formation of long-chain fatty acids from acetyl-CoA, malonyl-CoA and NADPH. The alpha subunit contains domains for: acyl carrier protein, 3-oxoacyl-[acyl-carrier-protein] reductase, and 3-oxoacyl-[acyl-carrier-protein] synthase. This is Fatty acid synthase subunit alpha (FAS2) from Candida parapsilosis (strain CDC 317 / ATCC MYA-4646) (Yeast).